Reading from the N-terminus, the 924-residue chain is Periplasmic nitrate reductase (924 aa).

A signal peptide (tat-type signal) is located at residues 1–30; sequence MNRRDFIKNTAIASAASVAGLSVPSSMLGA. The 4Fe-4S Mo/W bis-MGD-type domain occupies 35–91; the sequence is WKWDKAVCRFCGTGCGIMIARKDGKIVATKGDPAAPVNRGLNCIKGYFNAKIMYGED. [4Fe-4S] cluster-binding residues include Cys-42, Cys-45, Cys-49, and Cys-77. Mo-bis(molybdopterin guanine dinucleotide) contacts are provided by residues Lys-79, Gln-147, Asn-172, Cys-176, 209 to 216, Met-417, Gln-421, Asn-527, 552 to 553, Lys-575, Asp-602, and 814 to 823; these read WGANMAEM, SD, and TGRVLEHWHS. Trp-890 contributes to the substrate binding site. Positions 898 and 915 each coordinate Mo-bis(molybdopterin guanine dinucleotide).

Belongs to the prokaryotic molybdopterin-containing oxidoreductase family. NasA/NapA/NarB subfamily. In terms of assembly, component of the periplasmic nitrate reductase NapAB complex composed of NapA and NapB. [4Fe-4S] cluster is required as a cofactor. Mo-bis(molybdopterin guanine dinucleotide) serves as cofactor. In terms of processing, predicted to be exported by the Tat system. The position of the signal peptide cleavage has not been experimentally proven.

It is found in the periplasm. It carries out the reaction 2 Fe(II)-[cytochrome] + nitrate + 2 H(+) = 2 Fe(III)-[cytochrome] + nitrite + H2O. In terms of biological role, catalytic subunit of the periplasmic nitrate reductase complex NapAB. Receives electrons from NapB and catalyzes the reduction of nitrate to nitrite. The chain is Periplasmic nitrate reductase from Campylobacter jejuni subsp. jejuni serotype O:6 (strain 81116 / NCTC 11828).